The chain runs to 292 residues: Universal stress protein Mb2346c (292 aa).

The protein belongs to the universal stress protein A family.

This chain is Universal stress protein Mb2346c, found in Mycobacterium bovis (strain ATCC BAA-935 / AF2122/97).